The sequence spans 101 residues: Urease subunit beta (101 aa).

Belongs to the urease beta subunit family. In terms of assembly, heterotrimer of UreA (gamma), UreB (beta) and UreC (alpha) subunits. Three heterotrimers associate to form the active enzyme.

The protein resides in the cytoplasm. It catalyses the reaction urea + 2 H2O + H(+) = hydrogencarbonate + 2 NH4(+). The protein operates within nitrogen metabolism; urea degradation; CO(2) and NH(3) from urea (urease route): step 1/1. This chain is Urease subunit beta, found in Bradyrhizobium diazoefficiens (strain JCM 10833 / BCRC 13528 / IAM 13628 / NBRC 14792 / USDA 110).